A 293-amino-acid polypeptide reads, in one-letter code: 33 kDa chaperonin (293 aa).

2 disulfides stabilise this stretch: Cys229-Cys231 and Cys262-Cys265.

The protein belongs to the HSP33 family. In terms of processing, under oxidizing conditions two disulfide bonds are formed involving the reactive cysteines. Under reducing conditions zinc is bound to the reactive cysteines and the protein is inactive.

It localises to the cytoplasm. Its function is as follows. Redox regulated molecular chaperone. Protects both thermally unfolding and oxidatively damaged proteins from irreversible aggregation. Plays an important role in the bacterial defense system toward oxidative stress. The polypeptide is 33 kDa chaperonin (Methylobacillus flagellatus (strain ATCC 51484 / DSM 6875 / VKM B-1610 / KT)).